A 465-amino-acid polypeptide reads, in one-letter code: Uridine kinase-like protein 5 (465 aa).

Residues 26–230 form a uridine kinase region; that stretch reads LKQPFVIGVA…IVQHIRTKLC (205 aa). Positions 240–465 are uracil phosphoribosyltransferase; it reads NIFIISSTFQ…SLSTNLKLRS (226 aa). Residues K264, R273, and 307-310 each bind GTP; that span reads CKRL. 5-phospho-alpha-D-ribose 1-diphosphate-binding residues include R317 and R342. R362 provides a ligand contact to GTP. Residues D368, 373–376, and E439 contribute to the 5-phospho-alpha-D-ribose 1-diphosphate site; that span reads SGYS. 438–440 provides a ligand contact to uracil; the sequence is GEF.

It in the N-terminal section; belongs to the uridine kinase family. The protein in the C-terminal section; belongs to the UPRTase family. It depends on Mg(2+) as a cofactor.

It catalyses the reaction UMP + diphosphate = 5-phospho-alpha-D-ribose 1-diphosphate + uracil. The catalysed reaction is cytidine + ATP = CMP + ADP + H(+). The enzyme catalyses uridine + ATP = UMP + ADP + H(+). Its pathway is pyrimidine metabolism; UMP biosynthesis via salvage pathway; UMP from uracil: step 1/1. The protein operates within pyrimidine metabolism; CTP biosynthesis via salvage pathway; CTP from cytidine: step 1/3. It functions in the pathway pyrimidine metabolism; UMP biosynthesis via salvage pathway; UMP from uridine: step 1/1. With respect to regulation, allosterically activated by GTP. Its function is as follows. Involved in the pyrimidine salvage pathway. This chain is Uridine kinase-like protein 5 (UKL5), found in Arabidopsis thaliana (Mouse-ear cress).